We begin with the raw amino-acid sequence, 240 residues long: Large ribosomal subunit protein bL25 (240 aa).

Disordered stretches follow at residues 1–20 and 220–240; these read MAEN…GPAR and PAAG…KGKK. A compositionally biased stretch (low complexity) spans 220–229; sequence PAAGAAPAKG. A compositionally biased stretch (basic and acidic residues) spans 230 to 240; it reads GEAKGGDKGKK.

It belongs to the bacterial ribosomal protein bL25 family. CTC subfamily. In terms of assembly, part of the 50S ribosomal subunit; part of the 5S rRNA/L5/L18/L25 subcomplex. Contacts the 5S rRNA. Binds to the 5S rRNA independently of L5 and L18.

Its function is as follows. This is one of the proteins that binds to the 5S RNA in the ribosome where it forms part of the central protuberance. This Anaeromyxobacter dehalogenans (strain 2CP-C) protein is Large ribosomal subunit protein bL25.